A 432-amino-acid chain; its full sequence is E3 ubiquitin-protein ligase ATL42 (432 aa).

Residues 1-18 (MYQIFFFFLPLLHSYASA) form the signal peptide. The helical transmembrane segment at 37–57 (LAVVTGVLAIMFALTFVLLVY) threads the bilayer. The segment at 123–165 (CSVCLSKFESVEILRLLPKCRHAFHIGCIDQWLEQHATCPLCR) adopts an RING-type; atypical zinc-finger fold.

Belongs to the RING-type zinc finger family. ATL subfamily.

It localises to the membrane. It catalyses the reaction S-ubiquitinyl-[E2 ubiquitin-conjugating enzyme]-L-cysteine + [acceptor protein]-L-lysine = [E2 ubiquitin-conjugating enzyme]-L-cysteine + N(6)-ubiquitinyl-[acceptor protein]-L-lysine.. It functions in the pathway protein modification; protein ubiquitination. Its function is as follows. E3 ubiquitin-protein ligase able to catalyze polyubiquitination with ubiquitin-conjugating enzyme E2 UBC8 in vitro. In Arabidopsis thaliana (Mouse-ear cress), this protein is E3 ubiquitin-protein ligase ATL42 (ATL42).